We begin with the raw amino-acid sequence, 344 residues long: uncharacterized protein (344 aa).

Positions 190 to 232 are disordered; sequence SGKRVRSAKKSGADAARASEGATCDRASSESVSPTARPPAQAS.

This is an uncharacterized protein from Treponema pallidum (strain Nichols).